Reading from the N-terminus, the 78-residue chain is MKLTCMMIVAVLFLTAWIFITADNSRNGIENLPRMRRHEMKNPKASKLNKRGCREGGEFCGTLYEERCCSGWCFFVCV.

Residues 1-22 (MKLTCMMIVAVLFLTAWIFITA) form the signal peptide. Positions 23-51 (DNSRNGIENLPRMRRHEMKNPKASKLNKR) are excised as a propeptide. 3 disulfides stabilise this stretch: Cys53-Cys69, Cys60-Cys73, and Cys68-Cys77.

The protein belongs to the conotoxin O1 superfamily. As to expression, expressed by the venom duct.

It localises to the secreted. This chain is Conotoxin 6, found in Conus imperialis (Imperial cone).